A 443-amino-acid chain; its full sequence is Protoheme IX farnesyltransferase, mitochondrial (443 aa).

Residues 68-113 (LSQRVKPKPEPPASPFLEHTSSGQARADEDELPSFPAPSRPLSRKP) are disordered. Helical transmembrane passes span 174-194 (AGFA…TSLG), 230-250 (ISPL…VALL), 252-272 (WGVN…YTCC), 286-306 (VGAV…TGSL), 308-328 (AGAL…FNAL), 363-383 (LIAL…FPVI), and 410-430 (LFFC…TCKQ).

Belongs to the UbiA prenyltransferase family.

The protein resides in the mitochondrion membrane. The catalysed reaction is heme b + (2E,6E)-farnesyl diphosphate + H2O = Fe(II)-heme o + diphosphate. Converts protoheme IX and farnesyl diphosphate to heme O. The sequence is that of Protoheme IX farnesyltransferase, mitochondrial (Cox10) from Mus musculus (Mouse).